The following is a 434-amino-acid chain: UPF0597 protein CLI_2075 (434 aa).

Belongs to the UPF0597 family.

This is UPF0597 protein CLI_2075 from Clostridium botulinum (strain Langeland / NCTC 10281 / Type F).